The chain runs to 324 residues: Fibronectin type III domain-containing protein 8 (324 aa).

Positions 179–280 constitute a Fibronectin type-III domain; sequence PDTPFIFEHT…KPYKFATLAT (102 aa).

The polypeptide is Fibronectin type III domain-containing protein 8 (FNDC8) (Macaca fascicularis (Crab-eating macaque)).